The primary structure comprises 712 residues: Dynamin-1-like protein drp-1 (712 aa).

The Dynamin-type G domain occupies 24–304 (QIQLPQIVVV…LMHHIRNCLP (281 aa)). A G1 motif region spans residues 34–41 (GSQSAGKS). A G2 motif region spans residues 60 to 62 (VTR). The tract at residues 148–151 (DLPG) is G3 motif. The segment at 217–220 (TKLD) is G4 motif. The G5 motif stretch occupies residues 247–250 (VNRS). The segment at 280–502 (SRNGTPYLAK…LAYINTKHPE (223 aa)) is interaction with caspase ced-9. The disordered stretch occupies residues 523–542 (GRSRNRHASTGERAVSAHGE). The 92-residue stretch at 620-711 (VAIIERLIRN…IISEVRETQV (92 aa)) folds into the GED domain.

Belongs to the TRAFAC class dynamin-like GTPase superfamily. Dynamin/Fzo/YdjA family. In terms of assembly, interacts (via residues 280-502) with caspase ced-9; the interaction is enhanced by GTP rather than GDP; the interaction is probably direct and may occur at the mitochondrion. As to expression, highly expressed in neurons, in intestinal cells and in the body wall, pharyngeal, and vulval muscles.

It is found in the mitochondrion. Its subcellular location is the mitochondrion outer membrane. The protein resides in the cytoplasm. It localises to the cytosol. The catalysed reaction is GTP + H2O = GDP + phosphate + H(+). Its activity is regulated as follows. GTPase activity is increased by binding to phospholipid membranes. In terms of biological role, functions in mitochondrial division. Functions in peroxisomal division. Mediates membrane fission, perhaps mainly of the mitochondrial outer membrane. Mitochondrial fission may be promoted by recruitment to mitochondrial membranes via the egl-1/ced-9 complex. Involved in the coordination of mitochondrial division with autophagy in response to acute heat stress during larval development. Plays a role in apoptosis by promoting mitochondrial elimination and cell-death execution, acting downstream of caspase ced-3, and perhaps independently of FIS1-related protein fis-2, caspase ced-9 and apoptosis-inducing factor AIFM/wah-1. Role in promoting apoptosis dependent upon cleavage of drp-1 by ced-3. Involved in negatively modulating longevity in concert with the Insulin/IGF-1-like signaling (IIS) mediated pathway. The chain is Dynamin-1-like protein drp-1 from Caenorhabditis elegans.